Reading from the N-terminus, the 138-residue chain is Putative pre-16S rRNA nuclease (138 aa).

This sequence belongs to the YqgF nuclease family.

It localises to the cytoplasm. In terms of biological role, could be a nuclease involved in processing of the 5'-end of pre-16S rRNA. This Azobacteroides pseudotrichonymphae genomovar. CFP2 protein is Putative pre-16S rRNA nuclease.